Here is a 320-residue protein sequence, read N- to C-terminus: Mechanosensory protein 3 (320 aa).

LIM zinc-binding domains follow at residues 29 to 79 (CNCC…CSQH) and 89 to 145 (CAGC…CMTH). A DNA-binding region (homeobox) is located at residues 216–275 (RRGPRTTIKQNQLDVLNEMFSNTPKPSKHARAKKALETGLSMRVIQVWFQNRRSKERRLK).

It is found in the nucleus. Its function is as follows. Specifies differentiation of the set of six touch receptor neurons. Binds cooperatively as a heterodimer with unc-86 to sites in the mec-3 gene promoter. The chain is Mechanosensory protein 3 (mec-3) from Caenorhabditis remanei (Caenorhabditis vulgaris).